A 379-amino-acid chain; its full sequence is Glutamate 5-kinase (379 aa).

Position 15 (Lys-15) interacts with ATP. Residues Ser-54, Asp-144, and Asn-156 each coordinate substrate. 176–177 (TD) lines the ATP pocket. Residues 282–360 (KGVILVDAGA…GEIERALGYK (79 aa)) form the PUA domain.

It belongs to the glutamate 5-kinase family.

It localises to the cytoplasm. It carries out the reaction L-glutamate + ATP = L-glutamyl 5-phosphate + ADP. It functions in the pathway amino-acid biosynthesis; L-proline biosynthesis; L-glutamate 5-semialdehyde from L-glutamate: step 1/2. Its function is as follows. Catalyzes the transfer of a phosphate group to glutamate to form L-glutamate 5-phosphate. The sequence is that of Glutamate 5-kinase from Anaeromyxobacter dehalogenans (strain 2CP-C).